A 351-amino-acid polypeptide reads, in one-letter code: Histidinol-phosphate aminotransferase (351 aa).

Position 221 is an N6-(pyridoxal phosphate)lysine (lysine 221).

This sequence belongs to the class-II pyridoxal-phosphate-dependent aminotransferase family. Histidinol-phosphate aminotransferase subfamily. As to quaternary structure, homodimer. The cofactor is pyridoxal 5'-phosphate.

The catalysed reaction is L-histidinol phosphate + 2-oxoglutarate = 3-(imidazol-4-yl)-2-oxopropyl phosphate + L-glutamate. Its pathway is amino-acid biosynthesis; L-histidine biosynthesis; L-histidine from 5-phospho-alpha-D-ribose 1-diphosphate: step 7/9. The protein is Histidinol-phosphate aminotransferase of Staphylococcus epidermidis (strain ATCC 35984 / DSM 28319 / BCRC 17069 / CCUG 31568 / BM 3577 / RP62A).